The primary structure comprises 78 residues: Protein EcdD (78 aa).

Involved in the non-oxidative decarboxylation and detoxification of phenolic derivatives under anaerobic conditions, however the precise biochemical function in metabolism of phenolic acid is unknown. This is Protein EcdD from Escherichia coli O157:H7.